Here is a 258-residue protein sequence, read N- to C-terminus: 5'-nucleotidase SurE (258 aa).

Positions 8, 9, 40, and 93 each coordinate a divalent metal cation.

Belongs to the SurE nucleotidase family. A divalent metal cation is required as a cofactor.

The protein resides in the cytoplasm. It carries out the reaction a ribonucleoside 5'-phosphate + H2O = a ribonucleoside + phosphate. Nucleotidase that shows phosphatase activity on nucleoside 5'-monophosphates. The chain is 5'-nucleotidase SurE from Afipia carboxidovorans (strain ATCC 49405 / DSM 1227 / KCTC 32145 / OM5) (Oligotropha carboxidovorans).